The primary structure comprises 549 residues: Hydroxylamine reductase (549 aa).

[4Fe-4S] cluster contacts are provided by Cys5, Cys8, Cys17, and Cys23. 8 residues coordinate hybrid [4Fe-2O-2S] cluster: His243, Glu267, Cys311, Cys403, Cys431, Cys456, Glu491, and Lys493. Cys403 carries the post-translational modification Cysteine persulfide.

This sequence belongs to the HCP family. [4Fe-4S] cluster is required as a cofactor. Requires hybrid [4Fe-2O-2S] cluster as cofactor.

The protein localises to the cytoplasm. The enzyme catalyses A + NH4(+) + H2O = hydroxylamine + AH2 + H(+). Catalyzes the reduction of hydroxylamine to form NH(3) and H(2)O. In Desulfitobacterium hafniense (strain DSM 10664 / DCB-2), this protein is Hydroxylamine reductase.